A 641-amino-acid polypeptide reads, in one-letter code: Sodium-dependent nutrient amino acid transporter 1 (641 aa).

Polar residues predominate over residues 1-21 (MELKNIEQQPQLQNGNGTATE). Positions 1 to 37 (MELKNIEQQPQLQNGNGTATENNEKGEQKPTEGGERT) are disordered. The Cytoplasmic segment spans residues 1–38 (MELKNIEQQPQLQNGNGTATENNEKGEQKPTEGGERTN). Residues 22 to 35 (NNEKGEQKPTEGGE) show a composition bias toward basic and acidic residues. 3 consecutive transmembrane segments (helical) span residues 39-59 (WGNGLEFLMSCISVSVGLGNV), 72-92 (GAFLIPYIIVLFLIGKPMYYL), and 125-145 (TVCIISYYSSLLALTLYYLFV). Residues N181, N190, and N198 are each glycosylated (N-linked (GlcNAc...) asparagine). Helical transmembrane passes span 229–249 (PDWKLTLALLVSWIVTFLVIM), 258–278 (AAYFLAIFPYVVLFVLLGRAV), 307–327 (AVVQCFFSLAVSCGPIIMFAS), 341–361 (IVTTLDTLTSLLGGITIFAIL), 401–421 (LFSVLFFFMLFVLGIGSIVAL), 441–461 (VALVTSICGFLLGLVYVTPGG), 474–494 (TYVVFILAIFELAGIVWIYGL), 516–536 (CWSFFTPVMMIIIFIYSMATI), and 552–572 (IAGWIVFAIGTAQFPLWGIWY).

The protein belongs to the sodium:neurotransmitter symporter (SNF) (TC 2.A.22) family.

It localises to the membrane. In terms of biological role, unusual broad substrate spectrum amino acid:sodium cotransporter that promotes absorption of the D isomers of essential amino acids. Neutral amino acids are the preferred substrates, especially methionine and phenylalanine. In Drosophila willistoni (Fruit fly), this protein is Sodium-dependent nutrient amino acid transporter 1.